We begin with the raw amino-acid sequence, 980 residues long: NACHT, LRR and PYD domains-containing protein 7 (980 aa).

The 93-residue stretch at 1 to 93 (MTSPQLEWTL…CKMAKAEMME (93 aa)) folds into the Pyrin domain. A disordered region spans residues 104-123 (ELGDAEEDSELAKPGEKEGW). Residues 113-123 (ELAKPGEKEGW) are compositionally biased toward basic and acidic residues. The region spanning 172-491 (YTVVLHGPAG…LEKEEGEDRD (320 aa)) is the NACHT domain. 178 to 185 (GPAGVGKT) is a binding site for ATP. LRR repeat units follow at residues 614-638 (CQDL…DFEL), 674-697 (NSNL…ILCD), 760-784 (KCNL…FFYV), 788-810 (NQSL…MLLY), 817-840 (KHFL…DLAA), 845-868 (SKKL…FLCE), 874-897 (DCKL…YLSE), 902-928 (ACSL…ALEN), and 933-957 (LKHL…VKEK).

The protein belongs to the NLRP family. As to quaternary structure, directly interacts with CASP1 and IL1B. Expressed in numerous tissues including uterus and ovary, with low levels in heart and brain. Not detected in skeletal muscle.

In terms of biological role, inhibits CASP1/caspase-1-dependent IL1B secretion. The sequence is that of NACHT, LRR and PYD domains-containing protein 7 (NLRP7) from Homo sapiens (Human).